The following is a 98-amino-acid chain: MLEQQPTQNPLTVTMLNAQAQQVNKPLRDNVKAALKNYLSQLNGEDPTELYELVLSEIEHPMLDMVMQYTRGNQTRAATMLGINRGTLRKKLKKYGMG.

The H-T-H motif DNA-binding region spans 74–93; that stretch reads QTRAATMLGINRGTLRKKLK.

This sequence belongs to the transcriptional regulatory Fis family. In terms of assembly, homodimer.

In terms of biological role, activates ribosomal RNA transcription. Plays a direct role in upstream activation of rRNA promoters. In Mannheimia haemolytica (Pasteurella haemolytica), this protein is DNA-binding protein Fis.